Here is a 252-residue protein sequence, read N- to C-terminus: Thiazole synthase (252 aa).

K95 functions as the Schiff-base intermediate with DXP in the catalytic mechanism. Residues G156, 182-183 (AG), and 204-205 (NT) each bind 1-deoxy-D-xylulose 5-phosphate.

This sequence belongs to the ThiG family. As to quaternary structure, homotetramer. Forms heterodimers with either ThiH or ThiS.

It localises to the cytoplasm. The catalysed reaction is [ThiS sulfur-carrier protein]-C-terminal-Gly-aminoethanethioate + 2-iminoacetate + 1-deoxy-D-xylulose 5-phosphate = [ThiS sulfur-carrier protein]-C-terminal Gly-Gly + 2-[(2R,5Z)-2-carboxy-4-methylthiazol-5(2H)-ylidene]ethyl phosphate + 2 H2O + H(+). Its pathway is cofactor biosynthesis; thiamine diphosphate biosynthesis. Functionally, catalyzes the rearrangement of 1-deoxy-D-xylulose 5-phosphate (DXP) to produce the thiazole phosphate moiety of thiamine. Sulfur is provided by the thiocarboxylate moiety of the carrier protein ThiS. In vitro, sulfur can be provided by H(2)S. This Shewanella sp. (strain ANA-3) protein is Thiazole synthase.